A 233-amino-acid polypeptide reads, in one-letter code: MAAVSEVEVDGVVFPPVARPPGSGHAHFLAGAGVRGVEIAGNFIKFTAIGVYLEEGAAVPALAKKWAGKSADELAADAAFFRDVVTGDFEKFTRVTMILPLTGEQYSDKVTENCVAAWKAAGVYTDAEGAAADKFKEAFKPHSFPPGASILFTHSPPGVLTVAFSKDSSVPEGAVAAAAIENRALCEAVLDSIIGEHGVSPAAKRSIAARVSQLLKAESTGDVAAAEPAPVSA.

The substrate site is built by Thr47, Asn113, and Ser192.

Belongs to the chalcone isomerase family.

It carries out the reaction a chalcone = a flavanone.. It participates in secondary metabolite biosynthesis; flavonoid biosynthesis. Catalyzes the intramolecular cyclization of bicyclic chalcones into tricyclic (S)-flavanones. Responsible for the isomerization of 4,2',4',6'-tetrahydroxychalcone (also termed chalcone) into naringenin. This Oryza sativa subsp. japonica (Rice) protein is Chalcone--flavanone isomerase (CHI).